Here is a 496-residue protein sequence, read N- to C-terminus: Glutamate--tRNA ligase (496 aa).

The 'HIGH' region motif lies at 10-20 (PSPTGPLHIGG). Residues 251-255 (KMSKR) carry the 'KMSKS' region motif. Lys254 contributes to the ATP binding site.

It belongs to the class-I aminoacyl-tRNA synthetase family. Glutamate--tRNA ligase type 1 subfamily. Monomer.

The protein resides in the cytoplasm. It carries out the reaction tRNA(Glu) + L-glutamate + ATP = L-glutamyl-tRNA(Glu) + AMP + diphosphate. Its function is as follows. Catalyzes the attachment of glutamate to tRNA(Glu) in a two-step reaction: glutamate is first activated by ATP to form Glu-AMP and then transferred to the acceptor end of tRNA(Glu). The protein is Glutamate--tRNA ligase of Heliobacterium modesticaldum (strain ATCC 51547 / Ice1).